We begin with the raw amino-acid sequence, 274 residues long: Large ribosomal subunit protein uL2cz/uL2cy (274 aa).

Disordered stretches follow at residues 1-26 and 223-274; these read MAIH…KSNP and MNPV…RRSK.

Belongs to the universal ribosomal protein uL2 family. In terms of assembly, part of the 50S ribosomal subunit.

It localises to the plastid. The protein localises to the chloroplast. In Daucus carota (Wild carrot), this protein is Large ribosomal subunit protein uL2cz/uL2cy (rpl2-A).